Consider the following 668-residue polypeptide: DNA ligase (668 aa).

Residues 34–38 (DAEYD), 83–84 (SL), and E117 each bind NAD(+). Catalysis depends on K119, which acts as the N6-AMP-lysine intermediate. Residues R140, E177, K293, and K317 each contribute to the NAD(+) site. Zn(2+)-binding residues include C411, C414, C429, and C434. The region spanning 591–668 (RVGGRFTGKT…SEDDFLELMQ (78 aa)) is the BRCT domain.

This sequence belongs to the NAD-dependent DNA ligase family. LigA subfamily. The cofactor is Mg(2+). Mn(2+) is required as a cofactor.

It catalyses the reaction NAD(+) + (deoxyribonucleotide)n-3'-hydroxyl + 5'-phospho-(deoxyribonucleotide)m = (deoxyribonucleotide)n+m + AMP + beta-nicotinamide D-nucleotide.. In terms of biological role, DNA ligase that catalyzes the formation of phosphodiester linkages between 5'-phosphoryl and 3'-hydroxyl groups in double-stranded DNA using NAD as a coenzyme and as the energy source for the reaction. It is essential for DNA replication and repair of damaged DNA. In Citrifermentans bemidjiense (strain ATCC BAA-1014 / DSM 16622 / JCM 12645 / Bem) (Geobacter bemidjiensis), this protein is DNA ligase.